The following is a 236-amino-acid chain: Small ribosomal subunit protein uS3 (236 aa).

A KH type-2 domain is found at 39–107 (IREFLTEELK…DTSLNIVEVR (69 aa)). Residues 214 to 236 (ASERRAVEGDNQGSSSNRRRENA) form a disordered region.

Belongs to the universal ribosomal protein uS3 family. As to quaternary structure, part of the 30S ribosomal subunit. Forms a tight complex with proteins S10 and S14.

Functionally, binds the lower part of the 30S subunit head. Binds mRNA in the 70S ribosome, positioning it for translation. This is Small ribosomal subunit protein uS3 from Brucella canis (strain ATCC 23365 / NCTC 10854 / RM-666).